The primary structure comprises 77 residues: Conotoxin Cl6.15 (77 aa).

Residues 1–19 form the signal peptide; sequence MKLSVKFLLFLMILPLIAG. Residues 20–37 constitute a propeptide that is removed on maturation; that stretch reads EDMSDNDAPKSVDVQRNV. 3 disulfides stabilise this stretch: cysteine 49–cysteine 61, cysteine 55–cysteine 66, and cysteine 60–cysteine 75.

The protein belongs to the conotoxin I1 superfamily. In terms of tissue distribution, expressed by the venom duct.

The protein resides in the secreted. The chain is Conotoxin Cl6.15 from Californiconus californicus (California cone).